The sequence spans 837 residues: Protein translocase subunit SecA (837 aa).

ATP is bound by residues glutamine 85, glycine 103–threonine 107, and aspartate 493. The Zn(2+) site is built by cysteine 821, cysteine 823, cysteine 832, and histidine 833.

The protein belongs to the SecA family. Monomer and homodimer. Part of the essential Sec protein translocation apparatus which comprises SecA, SecYEG and auxiliary proteins SecDF. Other proteins may also be involved. Requires Zn(2+) as cofactor.

It localises to the cell membrane. The protein localises to the cytoplasm. The catalysed reaction is ATP + H2O + cellular proteinSide 1 = ADP + phosphate + cellular proteinSide 2.. Part of the Sec protein translocase complex. Interacts with the SecYEG preprotein conducting channel. Has a central role in coupling the hydrolysis of ATP to the transfer of proteins into and across the cell membrane, serving as an ATP-driven molecular motor driving the stepwise translocation of polypeptide chains across the membrane. This chain is Protein translocase subunit SecA, found in Streptococcus pneumoniae serotype 19F (strain G54).